The following is an 80-amino-acid chain: Penaeidin-3 (80 aa).

An N-terminal signal peptide occupies residues 1-19 (MRLVVCLVYLVSFALVCQG). At glutamine 20 the chain carries Pyrrolidone carboxylic acid. Intrachain disulfides connect cysteine 54–cysteine 67, cysteine 57–cysteine 74, and cysteine 68–cysteine 75.

It belongs to the penaeidin family. Post-translationally, the N-terminus forms pyrrolidone carboxylic acid. In terms of tissue distribution, strongly expressed in hemocytes, and to a lesser extent in heart, muscle, gills, intestine and eyestalk. Lowest expression in hepatopancreas.

The protein localises to the cytoplasmic granule. Functionally, antibacterial and antifungal activity. Presents chitin-binding activity. This is Penaeidin-3 from Penaeus indicus (Indian white prawn).